We begin with the raw amino-acid sequence, 630 residues long: Phosphomethylpyrimidine synthase (630 aa).

Substrate-binding positions include Asn-227, Met-256, Tyr-285, His-321, 341-343 (SRG), 382-385 (DGLR), and Glu-421. His-425 lines the Zn(2+) pocket. Tyr-448 contacts substrate. His-489 provides a ligand contact to Zn(2+). Residues Cys-569, Cys-572, and Cys-577 each contribute to the [4Fe-4S] cluster site.

The protein belongs to the ThiC family. Homodimer. [4Fe-4S] cluster is required as a cofactor.

It catalyses the reaction 5-amino-1-(5-phospho-beta-D-ribosyl)imidazole + S-adenosyl-L-methionine = 4-amino-2-methyl-5-(phosphooxymethyl)pyrimidine + CO + 5'-deoxyadenosine + formate + L-methionine + 3 H(+). It participates in cofactor biosynthesis; thiamine diphosphate biosynthesis. Functionally, catalyzes the synthesis of the hydroxymethylpyrimidine phosphate (HMP-P) moiety of thiamine from aminoimidazole ribotide (AIR) in a radical S-adenosyl-L-methionine (SAM)-dependent reaction. The sequence is that of Phosphomethylpyrimidine synthase from Hydrogenovibrio crunogenus (strain DSM 25203 / XCL-2) (Thiomicrospira crunogena).